The following is a 285-amino-acid chain: NADPH-dependent 7-cyano-7-deazaguanine reductase (285 aa).

Residue 91-93 coordinates substrate; sequence IES. Position 93 to 94 (93 to 94) interacts with NADPH; it reads SK. The active-site Thioimide intermediate is the cysteine 192. The Proton donor role is filled by aspartate 199. Substrate is bound at residue 231 to 232; it reads HE. Residue 260-261 participates in NADPH binding; that stretch reads RG.

It belongs to the GTP cyclohydrolase I family. QueF type 2 subfamily. Homodimer.

Its subcellular location is the cytoplasm. It catalyses the reaction 7-aminomethyl-7-carbaguanine + 2 NADP(+) = 7-cyano-7-deazaguanine + 2 NADPH + 3 H(+). The protein operates within tRNA modification; tRNA-queuosine biosynthesis. Its function is as follows. Catalyzes the NADPH-dependent reduction of 7-cyano-7-deazaguanine (preQ0) to 7-aminomethyl-7-deazaguanine (preQ1). The sequence is that of NADPH-dependent 7-cyano-7-deazaguanine reductase from Psychromonas ingrahamii (strain DSM 17664 / CCUG 51855 / 37).